We begin with the raw amino-acid sequence, 100 residues long: Putative protein adenylyltransferase MJ0604 (100 aa).

A GSX(10)DXD motif motif is present at residues 29–43 (GSYARGDYTEESDID). Residues Asp41 and Asp43 each contribute to the Mg(2+) site.

The protein belongs to the MntA antitoxin family. It depends on Mg(2+) as a cofactor.

It catalyses the reaction L-tyrosyl-[protein] + ATP = O-(5'-adenylyl)-L-tyrosyl-[protein] + diphosphate. The enzyme catalyses O-(5'-adenylyl)-L-tyrosyl-[protein] + ATP = O-[5'-(adenylyl-(5'-&gt;3')-adenylyl)]-L-tyrosyl-[protein] + diphosphate. Putative antitoxin component of a putative type VII toxin-antitoxin (TA) system. Its cognate toxin might be MJ0605, which it might AMPylate. The polypeptide is Putative protein adenylyltransferase MJ0604 (Methanocaldococcus jannaschii (strain ATCC 43067 / DSM 2661 / JAL-1 / JCM 10045 / NBRC 100440) (Methanococcus jannaschii)).